Here is a 436-residue protein sequence, read N- to C-terminus: 3-ketoacyl-CoA thiolase (436 aa).

Cysteine 99 (acyl-thioester intermediate) is an active-site residue. Catalysis depends on proton acceptor residues histidine 392 and cysteine 422.

The protein belongs to the thiolase-like superfamily. Thiolase family. In terms of assembly, heterotetramer of two alpha chains (FadJ) and two beta chains (FadI).

It is found in the cytoplasm. The enzyme catalyses an acyl-CoA + acetyl-CoA = a 3-oxoacyl-CoA + CoA. Its pathway is lipid metabolism; fatty acid beta-oxidation. In terms of biological role, catalyzes the final step of fatty acid oxidation in which acetyl-CoA is released and the CoA ester of a fatty acid two carbons shorter is formed. The protein is 3-ketoacyl-CoA thiolase of Shewanella denitrificans (strain OS217 / ATCC BAA-1090 / DSM 15013).